A 213-amino-acid polypeptide reads, in one-letter code: High frequency lysogenization protein HflD homolog (213 aa).

It belongs to the HflD family.

It localises to the cytoplasm. Its subcellular location is the cell inner membrane. The protein is High frequency lysogenization protein HflD homolog of Alcanivorax borkumensis (strain ATCC 700651 / DSM 11573 / NCIMB 13689 / SK2).